The following is a 1744-amino-acid chain: Complement C4-B (1744 aa).

The signal sequence occupies residues 1–19 (MRLLWGLIWASSFFTLSLQ). Cys-68 and Cys-97 are disulfide-bonded. Residue Asn-226 is glycosylated (N-linked (GlcNAc...) asparagine). Cys-635 and Cys-669 are disulfide-bonded. Residues 676–679 (RKKR) constitute a propeptide that is removed on maturation. 3 cysteine pairs are disulfide-bonded: Cys-702–Cys-728, Cys-703–Cys-735, and Cys-716–Cys-736. The Anaphylatoxin-like domain occupies 702 to 736 (CCQDGVTRLPMMRSCEQRAARVQQPDCREPFLSCC). Asn-862 is a glycosylation site (N-linked (GlcNAc...) asparagine). Phosphoserine is present on Ser-918. Residues 1010–1013 (CGEQ) constitute a cross-link (isoglutamyl cysteine thioester (Cys-Gln)). N-linked (GlcNAc...) asparagine glycans are attached at residues Asn-1328 and Asn-1391. 3 positions are modified to sulfotyrosine: Tyr-1417, Tyr-1420, and Tyr-1422. A propeptide spanning residues 1447-1453 (RRNRRRR) is cleaved from the precursor. 5 cysteine pairs are disulfide-bonded: Cys-1471/Cys-1535, Cys-1583/Cys-1588, Cys-1595/Cys-1673, Cys-1618/Cys-1742, and Cys-1718/Cys-1727. The region spanning 1595-1742 (CPRQRRALER…FLQEYGTQGC (148 aa)) is the NTR domain.

As to quaternary structure, in absence of complement activation, circulates in blood as a disulfide-linked trimer of an alpha, beta and gamma chain. In terms of assembly, complement C4b is composed of complement C4b-A, complement C4 beta and complement C4 gamma chains that are associated via disulfide bonds. Non-enzymatic component of the C3 convertase, also named C4bC2b, composed of the serine protease complement C2b (C2), as well as complement C4b. Non-enzymatic component of the C5 convertase, also named C4bC2bC3b, composed of the serine protease complement C2b (C2), complement C3b, as well as complement C4b. Interacts with CR1 (via Sushi 1 and Sushi 2 domains). (Microbial infection) Binds B.burgdorferi OspC, the interaction is inhibited by complement factor C2. This binding may inhibit the complement cascade and allow the bacteria to survive in the host bloodstream. In terms of processing, prior to secretion, the single-chain precursor is enzymatically cleaved by plasminogen (PLG) to yield non-identical chains alpha, beta and gamma. During activation of the complement systems, the alpha chain is cleaved into C4a and C4b by different proteases depending on the complement pathway: C4b stays linked to the beta and gamma chains, while C4a is released in the plasma. The alpha chain is cleaved by C1S to generate C4a and C4b following activation by the classical complement system. The alpha chain is cleaved to generate C4a and C4b by MASP2 following activation by the lectin complement system. The alpha chain is cleaved by GZMK to generate C4a and C4b following activation by the GZMK complement system. Further degradation of C4b by C1 into the inactive fragments C4c and C4d blocks the generation of C3 convertase. The proteolytic cleavages often are incomplete so that many structural forms can be found in plasma. Post-translationally, upon activation, the internal thioester bond reacts with carbohydrate antigens on the target surface to form amide or ester bonds, leading to covalent association with the surface of pathogens. Complement C4b interacts with complement C3b via a thioester linkage. In terms of processing, N- and O-glycosylated. O-glycosylated with a core 1 or possibly core 8 glycan. In terms of tissue distribution, complement component C4 is expressed at highest levels in the liver, at moderate levels in the adrenal cortex, adrenal medulla, thyroid gland, and the kidney, and at lowest levels in the heart, ovary, small intestine, thymus, pancreas and spleen. The extra-hepatic sites of expression may be important for the local protection and inflammatory response.

The protein localises to the secreted. It localises to the synapse. It is found in the cell projection. Its subcellular location is the axon. The protein resides in the dendrite. The protein localises to the cell surface. Its function is as follows. Precursor of non-enzymatic components of the classical, lectin and GZMK complement pathways, which consist in a cascade of proteins that leads to phagocytosis and breakdown of pathogens and signaling that strengthens the adaptive immune system. In terms of biological role, non-enzymatic component of C3 and C5 convertases. Generated following cleavage by complement proteases (C1S, MASP2 or GZMK, depending on the complement pathway), it covalently attaches to the surface of pathogens, where it acts as an opsonin that marks the surface of antigens for removal. It then recruits the serine protease complement C2b to form the C3 and C5 convertases, which cleave and activate C3 and C5, respectively, the next components of the complement pathways. Complement C4b-B isotype catalyzes the transacylation of the thioester carbonyl group to form ester bonds with carbohydrate antigens, while C4b-A isotype is responsible for effective binding to form amide bonds with immune aggregates or protein antigens. Putative humoral mediator released following cleavage by complement proteases (C1S, MASP2 or GZMK, depending on the complement pathway). While it is strongly similar to anaphylatoxins, its role is unclear. Was reported to act as a mediator of local inflammatory process; however these effects were probably due to contamination with C3a and/C5a anaphylatoxins in biological assays. The chain is Complement C4-B from Homo sapiens (Human).